The following is a 201-amino-acid chain: Cell division protein SepF (201 aa).

Residues 1 to 94 (MALKDLFSGF…TTSKNNARNV (94 aa)) form a disordered region. Residues 13-28 (VEEEDDELEAPPEENE) are compositionally biased toward acidic residues. A compositionally biased stretch (low complexity) spans 35–44 (PKQQAQSQNQ). Positions 59 to 88 (SIQSVPKKQSTRLQQSSGERKYQMNNTTSK) are enriched in polar residues.

Belongs to the SepF family. As to quaternary structure, homodimer. Interacts with FtsZ.

It is found in the cytoplasm. Functionally, cell division protein that is part of the divisome complex and is recruited early to the Z-ring. Probably stimulates Z-ring formation, perhaps through the cross-linking of FtsZ protofilaments. Its function overlaps with FtsA. The protein is Cell division protein SepF of Staphylococcus saprophyticus subsp. saprophyticus (strain ATCC 15305 / DSM 20229 / NCIMB 8711 / NCTC 7292 / S-41).